Here is a 311-residue protein sequence, read N- to C-terminus: Olfactory receptor 5L1 (311 aa).

Topologically, residues 1–25 (MGKENCTTVAEFILLGLSDVPELRV) are extracellular. A glycan (N-linked (GlcNAc...) asparagine) is linked at asparagine 5. The chain crosses the membrane as a helical span at residues 26–46 (CLFLLFLLIYGVTLLANLGMI). At 47–54 (ALIQVSSR) the chain is on the cytoplasmic side. Residues 55-75 (LHTPMYFFLSHLSSVDFCYSS) traverse the membrane as a helical segment. At 76-99 (IIVPKMLANIFNKDKAISFLGCMV) the chain is on the extracellular side. Residues cysteine 97 and cysteine 189 are joined by a disulfide bond. Residues 100–120 (QFYLFCTCVVTEVFLLAVMAY) form a helical membrane-spanning segment. Topologically, residues 121–139 (DRFVAICNPLLYTVTMSWK) are cytoplasmic. A helical membrane pass occupies residues 140-160 (VRVELASCCYFCGTVCSLIHL). Over 161-196 (CLALRIPFYRSNVINHFFCDLPPVLSLACSDITVNE) the chain is Extracellular. An N-linked (GlcNAc...) asparagine glycan is attached at asparagine 195. A helical transmembrane segment spans residues 197-217 (TLLFLVATLNESVTIMIILTS). The Cytoplasmic portion of the chain corresponds to 218–237 (YLLILTTILKMGSAEGRHKA). A helical membrane pass occupies residues 238-258 (FSTCASHLTAITVFHGTVLSI). Topologically, residues 259–271 (YCRPSSGNSGDAD) are extracellular. The helical transmembrane segment at 272–292 (KVATVFYTVVIPMLNSVIYSL) threads the bilayer. Residues 293–311 (RNKDVKEALRKVMGSKIHS) lie on the Cytoplasmic side of the membrane.

It belongs to the G-protein coupled receptor 1 family.

It is found in the cell membrane. In terms of biological role, odorant receptor. In Homo sapiens (Human), this protein is Olfactory receptor 5L1 (OR5L1).